We begin with the raw amino-acid sequence, 176 residues long: Transcriptional repressor NrdR (176 aa).

Residues 3–34 (CPFCQHTDSRVLESRSAEAGQSVRRRRECLQC) fold into a zinc finger. In terms of domain architecture, ATP-cone spans 49–139 (ITVIKRNQDR…VYRQFRGIRD (91 aa)). A disordered region spans residues 151-176 (GDGPLPSVLDEPYEDTAQPTIMISPQ). Positions 167 to 176 (AQPTIMISPQ) are enriched in polar residues.

This sequence belongs to the NrdR family. Zn(2+) serves as cofactor.

Negatively regulates transcription of bacterial ribonucleotide reductase nrd genes and operons by binding to NrdR-boxes. This Acaryochloris marina (strain MBIC 11017) protein is Transcriptional repressor NrdR.